We begin with the raw amino-acid sequence, 323 residues long: Lipoyl synthase (323 aa).

The [4Fe-4S] cluster site is built by cysteine 61, cysteine 66, cysteine 72, cysteine 87, cysteine 91, cysteine 94, and serine 300. Residues 73-289 form the Radical SAM core domain; the sequence is WDKKHATFMI…ETVAYSKGFL (217 aa).

Belongs to the radical SAM superfamily. Lipoyl synthase family. Requires [4Fe-4S] cluster as cofactor.

Its subcellular location is the cytoplasm. The enzyme catalyses [[Fe-S] cluster scaffold protein carrying a second [4Fe-4S](2+) cluster] + N(6)-octanoyl-L-lysyl-[protein] + 2 oxidized [2Fe-2S]-[ferredoxin] + 2 S-adenosyl-L-methionine + 4 H(+) = [[Fe-S] cluster scaffold protein] + N(6)-[(R)-dihydrolipoyl]-L-lysyl-[protein] + 4 Fe(3+) + 2 hydrogen sulfide + 2 5'-deoxyadenosine + 2 L-methionine + 2 reduced [2Fe-2S]-[ferredoxin]. Its pathway is protein modification; protein lipoylation via endogenous pathway; protein N(6)-(lipoyl)lysine from octanoyl-[acyl-carrier-protein]: step 2/2. In terms of biological role, catalyzes the radical-mediated insertion of two sulfur atoms into the C-6 and C-8 positions of the octanoyl moiety bound to the lipoyl domains of lipoate-dependent enzymes, thereby converting the octanoylated domains into lipoylated derivatives. The protein is Lipoyl synthase of Rhizobium etli (strain CIAT 652).